The chain runs to 557 residues: MSTSSQTIDVDALLDFSACDGSYNSPSLSPSTASKPTFASPVTAAVSTPSLPSTTQTLSGPSHNYDMYRQQTGFVPGALTNTMAVNQTNNTGYQDFGSLDYLSSFSPENDVFDFNASPSQGTMEMEFESPADSQFFPTVNPSSIQHDTSALSQTSSVGRLWPGAHSQAALAKAQAQQRQQQQQQQLIQQTQRQTSPKSRGKAPQPTDPIVEQKITQLLNSMRAKPASNEPESQSVLNNLPKSKKDEEEMDEDERLLASEEGKKLSSKERRQLRNKVSARAFRSRRKEYISQLEAEIANKVNENGDLRSQNRALMDENKRLSDLTRMLLSSPSFSTFLDNLSANPTGLPQGSPVKIEQNPQQEQNQVPKDVNAYNSQFSSQQQIGMAMIPEQTMDFSLLSLGNTYNFQPQVFVVDTPEVPNAIDASVLSGKTSNFVEESFSSDDEKVEVPVIERPLKTKAIETPEAPVDEEFESDPEFALFHSEPATTTTTPKDIDTENLTGIDLFGGIESEKMFARYELVNATEEEATAAFAMARVQRISASIDSVVSRLELLTMDI.

The segment covering 171 to 194 (AKAQAQQRQQQQQQQLIQQTQRQT) has biased composition (low complexity). Disordered regions lie at residues 171–209 (AKAQ…TDPI) and 221–273 (MRAK…RQLR). A compositionally biased stretch (polar residues) spans 229–240 (EPESQSVLNNLP). Basic and acidic residues predominate over residues 254–271 (RLLASEEGKKLSSKERRQ). The region spanning 264 to 327 (LSSKERRQLR…KRLSDLTRML (64 aa)) is the bZIP domain. Residues 267-286 (KERRQLRNKVSARAFRSRRK) are basic motif. Residues 289–296 (ISQLEAEI) form a leucine-zipper region. The disordered stretch occupies residues 344–364 (PTGLPQGSPVKIEQNPQQEQN).

The protein localises to the nucleus. BZIP-type transcription factor that functions as either an activator or a suppressor, and which contributes to the regulation of fungal growth, conidiation, cell wall integrity, and virulence. Plays a key role in virulence against insects by mediating cell wall integrity, cell surface hydrophobicity, and adherence to hydrophobic surfaces. Exhibits negative regulation of subtilisin proteases, but positive control of an adhesin gene. This Metarhizium robertsii (strain ARSEF 23 / ATCC MYA-3075) (Metarhizium anisopliae (strain ARSEF 23)) protein is BZIP-type transcription factor MBZ1.